We begin with the raw amino-acid sequence, 432 residues long: tRNA modification GTPase MnmE (432 aa).

Positions 23, 85, and 124 each coordinate (6S)-5-formyl-5,6,7,8-tetrahydrofolate. Positions 217–362 constitute a TrmE-type G domain; that stretch reads GARLALIGAP…LKEAVREALL (146 aa). N227 is a binding site for K(+). Residues 227–232, 246–252, and 271–274 contribute to the GTP site; these read NAGKSS, SPIPGTT, and DTAG. S231 provides a ligand contact to Mg(2+). K(+) contacts are provided by S246, I248, and T251. A Mg(2+)-binding site is contributed by T252. Residue K432 coordinates (6S)-5-formyl-5,6,7,8-tetrahydrofolate.

The protein belongs to the TRAFAC class TrmE-Era-EngA-EngB-Septin-like GTPase superfamily. TrmE GTPase family. In terms of assembly, homodimer. Heterotetramer of two MnmE and two MnmG subunits. Requires K(+) as cofactor.

The protein resides in the cytoplasm. In terms of biological role, exhibits a very high intrinsic GTPase hydrolysis rate. Involved in the addition of a carboxymethylaminomethyl (cmnm) group at the wobble position (U34) of certain tRNAs, forming tRNA-cmnm(5)s(2)U34. This is tRNA modification GTPase MnmE from Thermus thermophilus (strain ATCC 27634 / DSM 579 / HB8).